The following is a 442-amino-acid chain: Exodeoxyribonuclease 7 large subunit (442 aa).

This sequence belongs to the XseA family. As to quaternary structure, heterooligomer composed of large and small subunits.

The protein localises to the cytoplasm. It catalyses the reaction Exonucleolytic cleavage in either 5'- to 3'- or 3'- to 5'-direction to yield nucleoside 5'-phosphates.. Bidirectionally degrades single-stranded DNA into large acid-insoluble oligonucleotides, which are then degraded further into small acid-soluble oligonucleotides. The protein is Exodeoxyribonuclease 7 large subunit of Shewanella woodyi (strain ATCC 51908 / MS32).